The sequence spans 935 residues: LPS-assembly protein LptD (935 aa).

Positions 1-33 are cleaved as a signal peptide; sequence MALKSPAFRRKFPLLVTGGLLALQPLATSYVVA. Residues 52-85 are disordered; that stretch reads KTPVNNLPPRPVHEGAAVSSGTEAAGEAETADRP. Positions 65–79 are enriched in low complexity; it reads EGAAVSSGTEAAGEA.

It belongs to the LptD family. Component of the lipopolysaccharide transport and assembly complex. Interacts with LptE and LptA.

It is found in the cell outer membrane. In terms of biological role, together with LptE, is involved in the assembly of lipopolysaccharide (LPS) at the surface of the outer membrane. This is LPS-assembly protein LptD from Pseudomonas putida (strain ATCC 700007 / DSM 6899 / JCM 31910 / BCRC 17059 / LMG 24140 / F1).